Reading from the N-terminus, the 284-residue chain is NH(3)-dependent NAD(+) synthetase (284 aa).

Residue 51–58 (GISGGIDS) participates in ATP binding. Asp-57 is a binding site for Mg(2+). Arg-148 lines the deamido-NAD(+) pocket. Thr-168 is an ATP binding site. A Mg(2+)-binding site is contributed by Glu-173. Residues Lys-181 and Asp-188 each contribute to the deamido-NAD(+) site. Residues Lys-197 and Thr-219 each contribute to the ATP site. 268–269 (HK) provides a ligand contact to deamido-NAD(+).

This sequence belongs to the NAD synthetase family. As to quaternary structure, homodimer.

The catalysed reaction is deamido-NAD(+) + NH4(+) + ATP = AMP + diphosphate + NAD(+) + H(+). Its pathway is cofactor biosynthesis; NAD(+) biosynthesis; NAD(+) from deamido-NAD(+) (ammonia route): step 1/1. In terms of biological role, catalyzes the ATP-dependent amidation of deamido-NAD to form NAD. Uses ammonia as a nitrogen source. The polypeptide is NH(3)-dependent NAD(+) synthetase (Burkholderia pseudomallei (strain 1106a)).